We begin with the raw amino-acid sequence, 334 residues long: D-fructose 1,6-bisphosphatase class 2/sedoheptulose 1,7-bisphosphatase (334 aa).

Mn(2+) contacts are provided by aspartate 33, glutamate 57, aspartate 85, and glutamate 88. Substrate is bound by residues 88–90 (EGT), tyrosine 119, 164–166 (RAR), and 186–188 (DGD). Glutamate 213 is a binding site for Mn(2+).

Belongs to the FBPase class 2 family. In terms of assembly, homotetramer. It depends on Mn(2+) as a cofactor.

It catalyses the reaction beta-D-fructose 1,6-bisphosphate + H2O = beta-D-fructose 6-phosphate + phosphate. It carries out the reaction D-sedoheptulose 1,7-bisphosphate + H2O = D-sedoheptulose 7-phosphate + phosphate. It functions in the pathway carbohydrate biosynthesis; Calvin cycle. Catalyzes the hydrolysis of fructose 1,6-bisphosphate (Fru 1,6-P2) and sedoheptulose 1,7-bisphosphate (Sed 1,7-P2) to fructose 6-phosphate and sedoheptulose 7-phosphate, respectively. The polypeptide is D-fructose 1,6-bisphosphatase class 2/sedoheptulose 1,7-bisphosphatase (Prochlorococcus marinus (strain MIT 9313)).